The following is a 264-amino-acid chain: Indole-3-glycerol phosphate synthase (264 aa).

The protein belongs to the TrpC family.

The catalysed reaction is 1-(2-carboxyphenylamino)-1-deoxy-D-ribulose 5-phosphate + H(+) = (1S,2R)-1-C-(indol-3-yl)glycerol 3-phosphate + CO2 + H2O. It functions in the pathway amino-acid biosynthesis; L-tryptophan biosynthesis; L-tryptophan from chorismate: step 4/5. This is Indole-3-glycerol phosphate synthase from Lactococcus lactis subsp. cremoris (strain MG1363).